The primary structure comprises 511 residues: 2'-acyl-2-O-sulfo-trehalose (hydroxy)phthioceranyltransferase PapA1 (511 aa).

It belongs to the PapA acyltransferase family.

The enzyme catalyses a (hydroxy)phthioceranyl-[(hydroxy)phthioceranic acid synthase] + 2'-palmitoyl/stearoyl-2-O-sulfo-alpha,alpha-trehalose = a 3'-(hydroxy)phthioceranyl-2'-palmitoyl/stearoyl-2-O-sulfo-alpha,alpha-trehalose + holo-[(hydroxy)phthioceranic acid synthase].. In terms of biological role, required for the biosynthesis of sulfolipid-1 (SL-1), a major mycobacterial cell wall lipid. Catalyzes the acylation of trehalose-2-sulfate-2'-palmitate (SL659) by adding the (hydroxy)phthioceranoyl group at the 3'-position to yield the diacylated intermediate 2-palmitoyl-3-(C43)-phthioceranyl-alpha, alpha'-D-trehalose-2'-sulfate (SL1278). The protein is 2'-acyl-2-O-sulfo-trehalose (hydroxy)phthioceranyltransferase PapA1 (papA1) of Mycobacterium tuberculosis (strain CDC 1551 / Oshkosh).